The chain runs to 200 residues: Thymidylate kinase (200 aa).

10–17 is an ATP binding site; the sequence is GIDGAGKS.

The protein belongs to the thymidylate kinase family.

It catalyses the reaction dTMP + ATP = dTDP + ADP. Functionally, phosphorylation of dTMP to form dTDP in both de novo and salvage pathways of dTTP synthesis. The polypeptide is Thymidylate kinase (Cupriavidus metallidurans (strain ATCC 43123 / DSM 2839 / NBRC 102507 / CH34) (Ralstonia metallidurans)).